A 295-amino-acid polypeptide reads, in one-letter code: MRHLITTKDFNKVEIMELFKEASDFLDEKPRTFLKGKSITTIFFENSTRTLSSFESAARRLGARVLRLDVSRSSSSKGETLYDTAANLDAMSPNAIVVRHANSGVPLILAKHIHCPVVNGGDGKHAHPTQALLDLFTIYNHFQGDVEGKKICIVGDIKNSRVAASNIELLSRFNLDITLVAPPHFMPNTHLKKHYKLDENIIANSDIIMSLRTQTERHNKTVYASLKDYANDFCIQKSLVKDKKLILLHPGPVNRNIDISDEMMSDERTLVLKQVKNGVAIRMAVLKKLILENEG.

Arg49 and Thr50 together coordinate carbamoyl phosphate. Residue Lys77 coordinates L-aspartate. The carbamoyl phosphate site is built by Arg99, His127, and Gln130. The L-aspartate site is built by Arg161 and Arg212. The carbamoyl phosphate site is built by Gly251 and Pro252.

The protein belongs to the aspartate/ornithine carbamoyltransferase superfamily. ATCase family. Heterododecamer (2C3:3R2) of six catalytic PyrB chains organized as two trimers (C3), and six regulatory PyrI chains organized as three dimers (R2).

It carries out the reaction carbamoyl phosphate + L-aspartate = N-carbamoyl-L-aspartate + phosphate + H(+). The protein operates within pyrimidine metabolism; UMP biosynthesis via de novo pathway; (S)-dihydroorotate from bicarbonate: step 2/3. In terms of biological role, catalyzes the condensation of carbamoyl phosphate and aspartate to form carbamoyl aspartate and inorganic phosphate, the committed step in the de novo pyrimidine nucleotide biosynthesis pathway. This Campylobacter jejuni subsp. jejuni serotype O:6 (strain 81116 / NCTC 11828) protein is Aspartate carbamoyltransferase catalytic subunit.